The chain runs to 77 residues: Probable Vpr-like protein (77 aa).

The Nuclear export signal signature appears at 34–42 (LIRLLQGLL). The short motif at 44–53 (RLRFRKPKSK) is the Nuclear localization signal element.

The protein resides in the virion. It localises to the host nucleus. In terms of biological role, seems to function as a Vpr-like protein, since it mediates host cell cycle arrest in G2 phase. Cell cycle arrest creates a favorable environment for maximizing viral expression and production. In Felidae (cat family), this protein is Probable Vpr-like protein.